The sequence spans 49 residues: Large ribosomal subunit protein eL40 (49 aa).

The protein belongs to the eukaryotic ribosomal protein eL40 family.

This Methanosarcina barkeri (strain Fusaro / DSM 804) protein is Large ribosomal subunit protein eL40.